We begin with the raw amino-acid sequence, 387 residues long: Gamma-butyrobetaine dioxygenase (387 aa).

Residues Cys-38, Cys-40, Cys-43, and His-82 each contribute to the Zn(2+) site. Fe cation contacts are provided by His-202, Asp-204, and His-347. Ser-351 bears the Phosphoserine mark.

This sequence belongs to the gamma-BBH/TMLD family. Fe(2+) is required as a cofactor. It depends on L-ascorbate as a cofactor.

It localises to the cytoplasm. The enzyme catalyses 4-(trimethylamino)butanoate + 2-oxoglutarate + O2 = carnitine + succinate + CO2. Its pathway is amine and polyamine biosynthesis; carnitine biosynthesis. Its function is as follows. Catalyzes the formation of L-carnitine from gamma-butyrobetaine. This Pongo abelii (Sumatran orangutan) protein is Gamma-butyrobetaine dioxygenase (BBOX1).